Reading from the N-terminus, the 357-residue chain is G-protein coupled receptor 183 (357 aa).

The Extracellular segment spans residues 1–32; the sequence is MANNFTTPLAASHGNNCDLYAHHSTARILMPL. Residue asparagine 4 is glycosylated (N-linked (GlcNAc...) asparagine). Residues 33 to 53 form a helical membrane-spanning segment; the sequence is HYSLVFIIGLVGNLLALVVIV. Topologically, residues 54-68 are cytoplasmic; sequence QNRKKINSTTLYSMN. Residues 69-89 form a helical membrane-spanning segment; it reads LVISDILFTTALPTRIVYYAL. Arginine 83 contacts 7alpha,25-dihydroxycholesterol. The Extracellular segment spans residues 90-101; sequence GFDWRIGDALCR. Cysteine 100 and cysteine 177 are disulfide-bonded. The chain crosses the membrane as a helical span at residues 102–122; sequence ITALLFYINTYAGVNFMTCLS. Positions 108 and 112 each coordinate 7alpha,25-dihydroxycholesterol. The tract at residues 122–130 is interaction with G proteins; it reads SIDRFFAVV. Topologically, residues 123-143 are cytoplasmic; the sequence is IDRFFAVVHPLRYNKIKRIEY. A helical membrane pass occupies residues 144–164; it reads AKGICVFVWILVFAQTLPLLL. At 165–190 the chain is on the extracellular side; sequence KPMSKQEADKTTCMEYPNFEGTASLP. The helical transmembrane segment at 191–211 threads the bilayer; it reads WILLGACLLGYVLPLAIILLC. The Cytoplasmic segment spans residues 212–240; that stretch reads YSQICCKLFRTAKQNPLTEKSGVNKKALN. Residues 241–261 traverse the membrane as a helical segment; it reads TIILIIGVFVLCFTPYHVAIM. Tyrosine 256 is a binding site for 7alpha,25-dihydroxycholesterol. The Extracellular portion of the chain corresponds to 262–287; sequence QHMVKTLYAPGALGCGVRHSFQISLH. Residues 288–308 form a helical membrane-spanning segment; that stretch reads FTVCLMNFNCCMDPFIYFFAC. At 309-357 the chain is on the cytoplasmic side; that stretch reads KGYKRKVMKMLKRQVSVSISSAVRSAPEENSREMTESQMMIHSKASNGR. Phosphoserine occurs at positions 324 and 345. Residues 336–357 form a disordered region; that stretch reads EENSREMTESQMMIHSKASNGR. A compositionally biased stretch (polar residues) spans 344 to 357; the sequence is ESQMMIHSKASNGR.

The protein belongs to the G-protein coupled receptor 1 family. In terms of assembly, homodimer and heterodimer. Heterodimerizes with CXCR5; leading to modulate the interaction between of CXCL13 and CXCR5.

The protein resides in the cell membrane. Its function is as follows. G-protein coupled receptor expressed in lymphocytes that acts as a chemotactic receptor for B-cells, T-cells, splenic dendritic cells, monocytes/macrophages and astrocytes. Receptor for oxysterol 7-alpha,25-dihydroxycholesterol (7-alpha,25-OHC) and other related oxysterols. Mediates cell positioning and movement of a number of cells by binding the 7-alpha,25-OHC ligand that forms a chemotactic gradient. Binding of 7-alpha,25-OHC mediates the correct localization of B-cells during humoral immune responses. Guides B-cell movement along the B-cell zone-T-cell zone boundary and later to interfollicular and outer follicular regions. Its specific expression during B-cell maturation helps position B-cells appropriately for mounting T-dependent antibody responses. Collaborates with CXCR5 to mediate B-cell migration; probably by forming a heterodimer with CXCR5 that affects the interaction between of CXCL13 and CXCR5. Also acts as a chemotactic receptor for some T-cells upon binding to 7-alpha,25-OHC ligand. Promotes follicular helper T (Tfh) cells differentiation by positioning activated T-cells at the follicle-T-zone interface, promoting contact of newly activated CD4 T-cells with activated dendritic cells and exposing them to Tfh-cell-promoting inducible costimulator (ICOS) ligand. Expression in splenic dendritic cells is required for their homeostasis, localization and ability to induce B- and T-cell responses: GPR183 acts as a chemotactic receptor in dendritic cells that mediates the accumulation of CD4(+) dendritic cells in bridging channels. Regulates migration of astrocytes and is involved in communication between astrocytes and macrophages. Promotes osteoclast precursor migration to bone surfaces. Signals constitutively through G(i)-alpha, but not G(s)-alpha or G(q)-alpha. Signals constitutively also via MAPK1/3 (ERK1/2). In Rattus norvegicus (Rat), this protein is G-protein coupled receptor 183 (Gpr183).